Consider the following 132-residue polypeptide: Large-conductance mechanosensitive channel (132 aa).

2 helical membrane-spanning segments follow: residues 10-30 (FAVK…SAFG) and 76-96 (GNFI…FLAI).

It belongs to the MscL family. In terms of assembly, homopentamer.

The protein resides in the cell inner membrane. Channel that opens in response to stretch forces in the membrane lipid bilayer. May participate in the regulation of osmotic pressure changes within the cell. The sequence is that of Large-conductance mechanosensitive channel from Campylobacter hominis (strain ATCC BAA-381 / DSM 21671 / CCUG 45161 / LMG 19568 / NCTC 13146 / CH001A).